A 152-amino-acid polypeptide reads, in one-letter code: Protein SprT-like (152 aa).

The 141-residue stretch at Gln7–Pro147 folds into the SprT-like domain. Residue His67 participates in Zn(2+) binding. Glu68 is an active-site residue. His71 provides a ligand contact to Zn(2+).

It belongs to the SprT family. Zn(2+) serves as cofactor.

The protein resides in the cytoplasm. The chain is Protein SprT-like from Bacillus cereus (strain G9842).